A 183-amino-acid polypeptide reads, in one-letter code: Capsid protein (183 aa).

Residues 136–183 (NAPILSTLPETTVVRRRGRSPRRRTPSPRRRRSQSPRRRRSQSRESQC) form a disordered region. The segment covering 149 to 176 (VRRRGRSPRRRTPSPRRRRSQSPRRRRS) has biased composition (basic residues). Ser155, Ser162, and Ser170 each carry phosphoserine; by host. The stretch at 155–161 (SPRRRTP) is one 1; half-length repeat. Positions 155 to 177 (SPRRRTPSPRRRRSQSPRRRRSQ) are 3 X 8 AA repeats of S-P-R-R-R-[PR]-S-Q. Residues 158-175 (RRTPSPRRRRSQSPRRRR) carry the Bipartite nuclear localization signal motif. 2 consecutive repeat copies span residues 162 to 169 (SPRRRRSQ) and 170 to 177 (SPRRRRSQ). An RNA binding region spans residues 177 to 183 (QSRESQC).

It belongs to the orthohepadnavirus core antigen family. As to quaternary structure, homodimerizes, then multimerizes. Interacts with cytosol exposed regions of viral L glycoprotein present in the reticulum-to-Golgi compartment. Interacts with human FLNB. Phosphorylated form interacts with host importin alpha; this interaction depends on the exposure of the NLS, which itself depends upon genome maturation and/or phosphorylation of the capsid protein. Interacts with host NUP153. In terms of processing, phosphorylated by host SRPK1, SRPK2, and maybe protein kinase C or GAPDH. Phosphorylation is critical for pregenomic RNA packaging. Protein kinase C phosphorylation is stimulated by HBx protein and may play a role in transport of the viral genome to the nucleus at the late step during the viral replication cycle.

The protein localises to the virion. It localises to the host cytoplasm. Self assembles to form an icosahedral capsid. Most capsids appear to be large particles with an icosahedral symmetry of T=4 and consist of 240 copies of capsid protein, though a fraction forms smaller T=3 particles consisting of 180 capsid proteins. Entering capsids are transported along microtubules to the nucleus. Phosphorylation of the capsid is thought to induce exposure of nuclear localization signal in the C-terminal portion of the capsid protein that allows binding to the nuclear pore complex via the importin (karyopherin-) alpha and beta. Capsids are imported in intact form through the nuclear pore into the nuclear basket, where it probably binds NUP153. Only capsids that contain the mature viral genome can release the viral DNA and capsid protein into the nucleoplasm. Immature capsids get stuck in the basket. Capsids encapsulate the pre-genomic RNA and the P protein. Pre-genomic RNA is reverse-transcribed into DNA while the capsid is still in the cytoplasm. The capsid can then either be directed to the nucleus, providing more genomes for transcription, or bud through the endoplasmic reticulum to provide new virions. In Hepatitis B virus genotype D subtype ayw (isolate Italy/CI/1992) (HBV-D), this protein is Capsid protein.